Here is a 127-residue protein sequence, read N- to C-terminus: Putative pre-16S rRNA nuclease (127 aa).

This sequence belongs to the YqgF nuclease family.

The protein resides in the cytoplasm. Its function is as follows. Could be a nuclease involved in processing of the 5'-end of pre-16S rRNA. The sequence is that of Putative pre-16S rRNA nuclease from Campylobacter jejuni subsp. jejuni serotype O:23/36 (strain 81-176).